Consider the following 483-residue polypeptide: Protein EFFECTOR OF TRANSCRIPTION 2 (483 aa).

Residues 64–112 (SCPGLYELGVAVIGQEQCRKLEPDIVLASYLGQAESVRSRLQRYGRSGA) form the GIY-YIG domain. Cx9Cx9RCx2HK repeat units lie at residues 278–303 (CGVL…IEHK) and 338–363 (CGVI…EDHK). Residues 380-396 (EKTVKDEKPDPESHTES) show a composition bias toward basic and acidic residues. Residues 380–399 (EKTVKDEKPDPESHTESIEE) are disordered. Cx9Cx9RCx2HK repeat units follow at residues 406-431 (CEAT…WQHK) and 453-478 (CGVK…EEHK).

As to expression, expressed in vascular tissues of stems, hypocotyls, leaves and flowers. Expressed in the vascular bundles of xylem in shoot parenchyma cells. Expressed in the remnant cytoplasm of differentiated fiber cells and in protoxylem element of parenchymal cells.

It is found in the cytoplasm. The protein localises to the nucleus. In terms of biological role, transcriptional regulator involved in the regulation of cell differentiation in meristems. Probably regulates the expression of various KNAT genes involved in the maintenance of the cells in an undifferentiated, merismastic state. Plays a role in the regulation of gibberellin 20 oxidase and the gibberellin-regulated protein GASA4. Localizes in the nucleus during the cellular differentiation state and may act via a single strand cutting domain. Transcriptional regulator required for the induction of dormancy during late seed development. Interacts genetically with FUS3 and may be component of the same regulatory pathway during embryogenesis. Binds both linear and supercoiled DNA without sequence preference. The chain is Protein EFFECTOR OF TRANSCRIPTION 2 from Arabidopsis thaliana (Mouse-ear cress).